The primary structure comprises 507 residues: Probable Xaa-Pro aminopeptidase HCBG_01484 (507 aa).

Mn(2+)-binding residues include Asp283, Asp294, Glu431, and Glu469.

The protein belongs to the peptidase M24B family. Mn(2+) is required as a cofactor.

The enzyme catalyses Release of any N-terminal amino acid, including proline, that is linked to proline, even from a dipeptide or tripeptide.. In terms of biological role, catalyzes the removal of a penultimate prolyl residue from the N-termini of peptides. The sequence is that of Probable Xaa-Pro aminopeptidase HCBG_01484 from Ajellomyces capsulatus (strain G186AR / H82 / ATCC MYA-2454 / RMSCC 2432) (Darling's disease fungus).